We begin with the raw amino-acid sequence, 217 residues long: Nucleoredoxin-like protein 1 (217 aa).

In terms of domain architecture, Thioredoxin spans 1 to 164 (MASLFSGRIL…AAELLDRSFL (164 aa)). Basic and acidic residues predominate over residues 188-204 (VDRDVGRERGRNGRDSG). The interval 188 to 217 (VDRDVGRERGRNGRDSGDPQGDAGTRAELW) is disordered.

This sequence belongs to the nucleoredoxin family. In terms of assembly, interacts with isoform 1 of BSG. In terms of tissue distribution, expressed in the retina (at protein level). Expressed predominantly by photoreceptors in both the inner and outer nuclear layer (at protein level). Not expressed in the testis, spleen, intestine, lung, cerebellum, or kidney.

It localises to the cell projection. The protein resides in the cilium. It is found in the photoreceptor outer segment. Its function is as follows. Plays an important role in retinal cone photoreceptor survival. In association with glucose transporter SLC16A1/GLUT1 and BSG, promotes retinal cone survival by enhancing aerobic glycolysis and accelerating the entry of glucose into photoreceptors. May play a role in cone cell viability, slowing down cone degeneration, does not seem to play a role in degenerating rods. In Mus musculus (Mouse), this protein is Nucleoredoxin-like protein 1 (Nxnl1).